The sequence spans 107 residues: Late histone H2B.L4 (107 aa).

A glycan (O-linked (GlcNAc) serine) is linked at Ser-94. Lys-102 is covalently cross-linked (Glycyl lysine isopeptide (Lys-Gly) (interchain with G-Cter in ubiquitin)).

It belongs to the histone H2B family. As to quaternary structure, the nucleosome is a histone octamer containing two molecules each of H2A, H2B, H3 and H4 assembled in one H3-H4 heterotetramer and two H2A-H2B heterodimers. The octamer wraps approximately 147 bp of DNA. Post-translationally, monoubiquitination gives a specific tag for epigenetic transcriptional activation and is also prerequisite for histone H3 'Lys-4' and 'Lys-79' methylation. In terms of processing, glcNAcylation at Ser-94 promotes monoubiquitination of Lys-102. It fluctuates in response to extracellular glucose, and associates with transcribed genes.

The protein localises to the nucleus. The protein resides in the chromosome. Its function is as follows. Core component of nucleosome. Nucleosomes wrap and compact DNA into chromatin, limiting DNA accessibility to the cellular machineries which require DNA as a template. Histones thereby play a central role in transcription regulation, DNA repair, DNA replication and chromosomal stability. DNA accessibility is regulated via a complex set of post-translational modifications of histones, also called histone code, and nucleosome remodeling. The polypeptide is Late histone H2B.L4 (Strongylocentrotus purpuratus (Purple sea urchin)).